The following is a 306-amino-acid chain: Glutaminase (306 aa).

S64, N115, E159, N166, Y190, Y242, and V260 together coordinate substrate.

It belongs to the glutaminase family. In terms of assembly, homotetramer.

It catalyses the reaction L-glutamine + H2O = L-glutamate + NH4(+). This Aeromonas salmonicida (strain A449) protein is Glutaminase.